Consider the following 299-residue polypeptide: Sulfate adenylyltransferase subunit 2 (299 aa).

This sequence belongs to the PAPS reductase family. CysD subfamily. As to quaternary structure, sulfate-activating enzymes, NodP and NodQ, may be physically associated.

The catalysed reaction is sulfate + ATP + H(+) = adenosine 5'-phosphosulfate + diphosphate. Functionally, proposed to provide activated sulfate for transfer to nod factor. In Rhizobium tropici, this protein is Sulfate adenylyltransferase subunit 2 (nodP).